The primary structure comprises 339 residues: Outer membrane protein assembly factor BamC (339 aa).

The signal sequence occupies residues 1–19; the sequence is MKFSRQLVLGSLAVLVLSA. Cys-20 is lipidated: N-palmitoyl cysteine. The S-diacylglycerol cysteine moiety is linked to residue Cys-20.

The protein belongs to the BamC family. Part of the Bam complex.

It is found in the cell outer membrane. In terms of biological role, part of the outer membrane protein assembly complex, which is involved in assembly and insertion of beta-barrel proteins into the outer membrane. This Vibrio cholerae serotype O1 (strain ATCC 39315 / El Tor Inaba N16961) protein is Outer membrane protein assembly factor BamC.